A 324-amino-acid chain; its full sequence is Methenyltetrahydromethanopterin cyclohydrolase (324 aa).

It belongs to the MCH family.

Its subcellular location is the cytoplasm. The catalysed reaction is 5,10-methenyl-5,6,7,8-tetrahydromethanopterin + H2O = N(5)-formyl-5,6,7,8-tetrahydromethanopterin + H(+). It functions in the pathway one-carbon metabolism; formaldehyde degradation; formate from formaldehyde (H(4)MPT route): step 3/5. Functionally, catalyzes the hydrolysis of methenyl-H(4)MPT(+) to 5-formyl-H(4)MPT. The chain is Methenyltetrahydromethanopterin cyclohydrolase from Methylobacterium sp. (strain 4-46).